Consider the following 317-residue polypeptide: NAC domain-containing protein 55 (317 aa).

Residues 14 to 162 (LPPGFRFYPT…DWVLCRIYKK (149 aa)) enclose the NAC domain. Residues 111 to 168 (VGIKKALVFYIGKAPKGTKTNWIMHEYRLIEPSRRNGSTKLDDWVLCRIYKKQTSAQK) mediate DNA binding.

In terms of tissue distribution, expressed in leaves.

The protein resides in the nucleus. Functionally, transcription factors that bind specifically to the 5'-CATGTG-3' motif. This chain is NAC domain-containing protein 55 (NAC055), found in Arabidopsis thaliana (Mouse-ear cress).